The primary structure comprises 436 residues: Fasciclin-like arabinogalactan protein 15 (436 aa).

A signal peptide spans 1 to 20 (MDDLSKLLFFLLLTISITTA). FAS1 domains follow at residues 31–165 (NSNS…ERLL) and 249–392 (VKDF…DGVL). N-linked (GlcNAc...) asparagine glycans are attached at residues N68 and N271.

The protein belongs to the fasciclin-like AGP family.

The protein localises to the secreted. Functionally, may be a cell surface adhesion protein. The chain is Fasciclin-like arabinogalactan protein 15 (FLA15) from Arabidopsis thaliana (Mouse-ear cress).